Reading from the N-terminus, the 689-residue chain is DNA ligase (689 aa).

NAD(+) contacts are provided by residues 40–44 (DSEYD), 89–90 (SL), and glutamate 121. Residue lysine 123 is the N6-AMP-lysine intermediate of the active site. NAD(+) contacts are provided by arginine 144, glutamate 179, lysine 295, and lysine 319. Zn(2+)-binding residues include cysteine 413, cysteine 416, cysteine 431, and cysteine 437. Residues 610 to 689 (REQSGLTDKI…EEWLTLIKNV (80 aa)) form the BRCT domain.

It belongs to the NAD-dependent DNA ligase family. LigA subfamily. Requires Mg(2+) as cofactor. It depends on Mn(2+) as a cofactor.

It catalyses the reaction NAD(+) + (deoxyribonucleotide)n-3'-hydroxyl + 5'-phospho-(deoxyribonucleotide)m = (deoxyribonucleotide)n+m + AMP + beta-nicotinamide D-nucleotide.. Its function is as follows. DNA ligase that catalyzes the formation of phosphodiester linkages between 5'-phosphoryl and 3'-hydroxyl groups in double-stranded DNA using NAD as a coenzyme and as the energy source for the reaction. It is essential for DNA replication and repair of damaged DNA. The polypeptide is DNA ligase (Rickettsia conorii (strain ATCC VR-613 / Malish 7)).